The following is a 260-amino-acid chain: MGFLKGKKFLIIGISSVRSIAFGIAKSLYNQKAELGFVCQNEKIRKKIKKLVEPMKSCIVLCCDVSNDKNIKKLFIDLGQVWKKFDGLVHAIAYCPKQYFNGDFIDNITREGFNISHEISSYSFIGLVKACRTMLNNFSSLLTLSYLGSQRVVPNYNVMGLAKASLEASVRYMASSLGKENIRVNAISSSPIKTISSYKITNFNKIRNCSYASSFLKNSVTSENIGNVASFLLSDLSLGITGSVIYVDNGFNVSSMNNIQ.

NAD(+)-binding positions include Gly-13, 19–20, Gln-40, 64–65, and Ile-92; these read SI and DV. Catalysis depends on proton acceptor residues Tyr-146 and Tyr-156. NAD(+) is bound by residues Lys-163 and 192–196; that span reads IKTIS.

Belongs to the short-chain dehydrogenases/reductases (SDR) family. FabI subfamily. As to quaternary structure, homotetramer.

The enzyme catalyses a 2,3-saturated acyl-[ACP] + NAD(+) = a (2E)-enoyl-[ACP] + NADH + H(+). It participates in lipid metabolism; fatty acid biosynthesis. It functions in the pathway cofactor biosynthesis; biotin biosynthesis. Its function is as follows. Catalyzes the reduction of a carbon-carbon double bond in an enoyl moiety that is covalently linked to an acyl carrier protein (ACP). Involved in the elongation cycle of fatty acid which are used in the lipid metabolism and in the biotin biosynthesis. This Buchnera aphidicola subsp. Acyrthosiphon pisum (strain APS) (Acyrthosiphon pisum symbiotic bacterium) protein is Enoyl-[acyl-carrier-protein] reductase [NADH] FabI (fabI).